Reading from the N-terminus, the 207-residue chain is Alpha-1-acid glycoprotein 2 (207 aa).

The signal sequence occupies residues 1–18; the sequence is MALHMILVMVSLLPLLEA. The residue at position 19 (glutamine 19) is a Pyrrolidone carboxylic acid. Residues asparagine 25, asparagine 34, asparagine 76, asparagine 94, and asparagine 104 are each glycosylated (N-linked (GlcNAc...) asparagine). A disulfide bond links cysteine 91 and cysteine 184. Residues 188–207 are disordered; that stretch reads EKQQLELEKETKKDPEEGQA.

This sequence belongs to the calycin superfamily. Lipocalin family. In terms of tissue distribution, expressed by the liver and secreted in plasma.

It is found in the secreted. Functionally, functions as a transport protein in the blood stream. Binds various ligands in the interior of its beta-barrel domain. Appears to function in modulating the activity of the immune system during the acute-phase reaction. The chain is Alpha-1-acid glycoprotein 2 (Orm2) from Mus musculus (Mouse).